Consider the following 91-residue polypeptide: MGCIKSKQDCTVHKTIQLTRNQEKDEMHNKELVGLVQANQEDSKLCSCSASPLLLEYAHRLSEDIVNKAVRQWAEVDSKYSDIPYIESDAI.

The N-myristoyl glycine moiety is linked to residue glycine 2.

This sequence belongs to the small membrane AKAP family. Post-translationally, may be palmitoylated at Cys-3.

Its subcellular location is the cell membrane. Binds to type I regulatory subunits of protein kinase A and may anchor/target them to the plasma membrane. This is Small membrane A-kinase anchor protein from Xenopus laevis (African clawed frog).